The primary structure comprises 276 residues: Large ribosomal subunit protein uL2 (276 aa).

Positions G223–K276 are disordered. A compositionally biased stretch (basic and acidic residues) spans D230–A240. The span at L257–K276 shows a compositional bias: basic residues.

Belongs to the universal ribosomal protein uL2 family. As to quaternary structure, part of the 50S ribosomal subunit. Forms a bridge to the 30S subunit in the 70S ribosome.

Its function is as follows. One of the primary rRNA binding proteins. Required for association of the 30S and 50S subunits to form the 70S ribosome, for tRNA binding and peptide bond formation. It has been suggested to have peptidyltransferase activity; this is somewhat controversial. Makes several contacts with the 16S rRNA in the 70S ribosome. In Thermus thermophilus (strain ATCC BAA-163 / DSM 7039 / HB27), this protein is Large ribosomal subunit protein uL2.